A 1101-amino-acid polypeptide reads, in one-letter code: Lysylphosphatidylglycerol biosynthesis bifunctional protein LysX (1101 aa).

The tract at residues 1–601 (MTATRLVRAH…RLHSDGTAPD (601 aa)) is phosphatidylglycerol lysyltransferase. 7 helical membrane-spanning segments follow: residues 18 to 38 (VPAAAGWIVGVIATLSLLASV), 60 to 80 (FPDTSFAWAFVLALLAAALAA), 84 to 104 (IAWWILTGYMVAAAVWNVTGL), 113 to 133 (DVGEIIGLGFHLAAIASLLLA), 151 to 171 (VTLVAGLGVGTLIGWGLLELF), 183 to 200 (YALNRVGAFAGADAGAFS), and 207 to 227 (VNALLGLFGAMALMIAAVVLF). The lysine--tRNA ligase stretch occupies residues 602-1101 (RIGPVGDGAD…TLPFPLAKPR (500 aa)). Residues 662–740 (VTVSGRVLRA…SVLVTRWRLI (79 aa)) constitute a DNA-binding region (OB). Residues Asp-1013 and Glu-1020 each contribute to the Mg(2+) site.

The protein in the N-terminal section; belongs to the LPG synthetase family. It in the C-terminal section; belongs to the class-II aminoacyl-tRNA synthetase family. It depends on Mg(2+) as a cofactor.

The protein localises to the cell membrane. The catalysed reaction is tRNA(Lys) + L-lysine + ATP = L-lysyl-tRNA(Lys) + AMP + diphosphate. The enzyme catalyses L-lysyl-tRNA(Lys) + a 1,2-diacyl-sn-glycero-3-phospho-(1'-sn-glycerol) = a 1,2-diacyl-sn-glycero-3-phospho-1'-(3'-O-L-lysyl)-sn-glycerol + tRNA(Lys). Functionally, catalyzes the production of L-lysyl-tRNA(Lys)transfer and the transfer of a lysyl group from L-lysyl-tRNA(Lys) to membrane-bound phosphatidylglycerol (PG), which produces lysylphosphatidylglycerol (LPG), one of the components of the bacterial membrane with a positive net charge. LPG synthesis contributes to the resistance to cationic antimicrobial peptides (CAMPs) and likely protects M.tuberculosis against the CAMPs produced by competiting microorganisms (bacteriocins). In fact, the modification of anionic phosphatidylglycerol with positively charged L-lysine results in repulsion of the peptides. In Mycolicibacterium gilvum (strain PYR-GCK) (Mycobacterium gilvum (strain PYR-GCK)), this protein is Lysylphosphatidylglycerol biosynthesis bifunctional protein LysX (lysX).